A 363-amino-acid chain; its full sequence is Protein disulfide-isomerase 1 (363 aa).

The N-terminal stretch at 1-20 is a signal peptide; that stretch reads MKILLFVTLIALAFVALCSA. 2 consecutive Thioredoxin domains span residues 21–132 and 133–285; these read EGNV…NHAK and TNVK…AAAE. Active-site nucleophile residues include C51, C54, C172, and C175. 2 disulfide bridges follow: C51–C54 and C172–C175.

Belongs to the protein disulfide isomerase family.

It localises to the endoplasmic reticulum lumen. The enzyme catalyses Catalyzes the rearrangement of -S-S- bonds in proteins.. In terms of biological role, participates in the folding of proteins containing disulfide bonds, may be involved in glycosylation, prolyl hydroxylation and triglyceride transfer. This is Protein disulfide-isomerase 1 (pdi1) from Dictyostelium discoideum (Social amoeba).